The chain runs to 278 residues: UPF0758 protein BURPS668_0979 (278 aa).

The tract at residues 1–64 (MQYEIVSAGE…ATAAARRGRD (64 aa)) is disordered. Residues 22-59 (AAAPAAPSSAVPSSAALSSAALSSAARPTGAPPATAAA) are compositionally biased toward low complexity. The MPN domain occupies 156–278 (LVDSPGAVDD…TFSFAQAGWI (123 aa)). Residues histidine 227, histidine 229, and aspartate 240 each coordinate Zn(2+). The JAMM motif motif lies at 227–240 (HNHPSGAVRPSAAD).

It belongs to the UPF0758 family.

In Burkholderia pseudomallei (strain 668), this protein is UPF0758 protein BURPS668_0979.